The following is a 380-amino-acid chain: MAPNLRKSHPLLKLVNNSLIDLPTPSNISAWWNFGSLLGICLLTQILTGLLLATHYTADTTLAFSSVAHTCRNVQYGWLIRNLHANGASFFFICIYLHIGRGFYYGSYLNKETWNTGVILLLALMATAFVGYVLPWGQMSFWGATVITNLFSAIPYIGQTLVEWAWGGFSVDNPTLTRFFALHFLLPFMIAGLAFIHLTFLHESGSNNPLGIPSNCDKIPFHPYFSLKDILGFIIMFLPLTTLALFSPNLLGDPENFTPANPLVTPPHIKPEWYFLFAYAILRSIPNKLGGVLALAASVLVLFLTPLLHKSKQRAMTFRPLSQLLFWTLVANLLILTWVGSQPVEHPFIIIGQLASLTYFTILLLLFPIIGALENKMLNY.

Helical transmembrane passes span 34–54 (FGSLLGICLLTQILTGLLLAT), 78–99 (WLIRNLHANGASFFFICIYLHI), 114–134 (WNTGVILLLALMATAFVGYVL), and 179–199 (FFALHFLLPFMIAGLAFIHLT). His84 and His98 together coordinate heme b. Positions 183 and 197 each coordinate heme b. His202 contacts a ubiquinone. The next 4 membrane-spanning stretches (helical) occupy residues 227–247 (LKDILGFIIMFLPLTTLALFS), 289–309 (LGGVLALAASVLVLFLTPLLH), 321–341 (LSQLLFWTLVANLLILTWVGS), and 348–368 (FIIIGQLASLTYFTILLLLFP).

This sequence belongs to the cytochrome b family. The cytochrome bc1 complex contains 11 subunits: 3 respiratory subunits (MT-CYB, CYC1 and UQCRFS1), 2 core proteins (UQCRC1 and UQCRC2) and 6 low-molecular weight proteins (UQCRH/QCR6, UQCRB/QCR7, UQCRQ/QCR8, UQCR10/QCR9, UQCR11/QCR10 and a cleavage product of UQCRFS1). This cytochrome bc1 complex then forms a dimer. Requires heme b as cofactor.

It localises to the mitochondrion inner membrane. Functionally, component of the ubiquinol-cytochrome c reductase complex (complex III or cytochrome b-c1 complex) that is part of the mitochondrial respiratory chain. The b-c1 complex mediates electron transfer from ubiquinol to cytochrome c. Contributes to the generation of a proton gradient across the mitochondrial membrane that is then used for ATP synthesis. The chain is Cytochrome b (MT-CYB) from Uria aalge (Common mure).